Reading from the N-terminus, the 152-residue chain is Endoribonuclease YbeY (152 aa).

3 residues coordinate Zn(2+): His-111, His-115, and His-121.

It belongs to the endoribonuclease YbeY family. Zn(2+) serves as cofactor.

It is found in the cytoplasm. In terms of biological role, single strand-specific metallo-endoribonuclease involved in late-stage 70S ribosome quality control and in maturation of the 3' terminus of the 16S rRNA. This is Endoribonuclease YbeY from Pseudomonas fluorescens (strain ATCC BAA-477 / NRRL B-23932 / Pf-5).